Reading from the N-terminus, the 387-residue chain is GDSL esterase/lipase At2g23540 (387 aa).

An N-terminal signal peptide occupies residues 1 to 32 (MATRASTSSRVSPAFTFLVIFFLLSLTASVEA). Ser-55 functions as the Nucleophile in the catalytic mechanism. N-linked (GlcNAc...) asparagine glycans are attached at residues Asn-139 and Asn-159. Active-site residues include Asp-352 and His-355. N-linked (GlcNAc...) asparagine glycosylation occurs at Asn-380.

The protein belongs to the 'GDSL' lipolytic enzyme family.

Its subcellular location is the secreted. The polypeptide is GDSL esterase/lipase At2g23540 (Arabidopsis thaliana (Mouse-ear cress)).